A 270-amino-acid chain; its full sequence is MGGQVRVAIVGAGGRMGRTLIESAYHQEHIRLGAAIERPGSSLVGVDAGELAGVGKLNVLVMDSLDYATDDFDVLIDFTAPEASIVHLDWCVRHKKAMVIGTTGFNHAQKEQINAFAEQTPVVMAPNMSVGVNLMWKLLELAAEVMGDYTDIEIIEGHHRHKKDAPSGTALKMGEVIAKTLGRDLEKCAVYGREGITGERDRETIGFATVRAGDLVGEHTAMFADIGERLEITHKASSRMTFANGAMRAAHWLVEQKPGLYDMQQVLGLN.

NAD(+) is bound by residues 11–16 (GAGGRM) and Glu-37. Arg-38 contributes to the NADP(+) binding site. Residues 101–103 (GTT) and 125–128 (APNM) each bind NAD(+). Catalysis depends on His-158, which acts as the Proton donor/acceptor. His-159 is a binding site for (S)-2,3,4,5-tetrahydrodipicolinate. Catalysis depends on Lys-162, which acts as the Proton donor. 168–169 (GT) is a binding site for (S)-2,3,4,5-tetrahydrodipicolinate.

It belongs to the DapB family.

The protein localises to the cytoplasm. It carries out the reaction (S)-2,3,4,5-tetrahydrodipicolinate + NAD(+) + H2O = (2S,4S)-4-hydroxy-2,3,4,5-tetrahydrodipicolinate + NADH + H(+). The catalysed reaction is (S)-2,3,4,5-tetrahydrodipicolinate + NADP(+) + H2O = (2S,4S)-4-hydroxy-2,3,4,5-tetrahydrodipicolinate + NADPH + H(+). It functions in the pathway amino-acid biosynthesis; L-lysine biosynthesis via DAP pathway; (S)-tetrahydrodipicolinate from L-aspartate: step 4/4. Functionally, catalyzes the conversion of 4-hydroxy-tetrahydrodipicolinate (HTPA) to tetrahydrodipicolinate. This chain is 4-hydroxy-tetrahydrodipicolinate reductase, found in Shewanella sp. (strain MR-4).